We begin with the raw amino-acid sequence, 131 residues long: D-ribose pyranase (131 aa).

Residue His20 is the Proton donor of the active site. Substrate-binding positions include Asp28, His98, and 120-122 (YAN).

Belongs to the RbsD / FucU family. RbsD subfamily. Homodecamer.

It localises to the cytoplasm. It carries out the reaction beta-D-ribopyranose = beta-D-ribofuranose. Its pathway is carbohydrate metabolism; D-ribose degradation; D-ribose 5-phosphate from beta-D-ribopyranose: step 1/2. In terms of biological role, catalyzes the interconversion of beta-pyran and beta-furan forms of D-ribose. The chain is D-ribose pyranase from Bacillus anthracis (strain A0248).